We begin with the raw amino-acid sequence, 1589 residues long: Polyhomeotic-proximal chromatin protein (1589 aa).

Basic and acidic residues predominate over residues 1-15; the sequence is MDRRALKFMQKRADT. 5 disordered regions span residues 1–85, 107–174, 252–290, 1112–1244, and 1260–1294; these read MDRR…GGKQ, KYDV…NCNS, LQQQ…STAI, LSTA…STTT, and AVST…NGSK. 3 stretches are compositionally biased toward low complexity: residues 18–28, 60–80, and 119–139; these read DTTTPVSTTAS, NHNN…QQQQ, and AQQQ…VTPT. A compositionally biased stretch (polar residues) spans 154–174; it reads HTPSTPNRPSAPSTPNTNCNS. Positions 260-271 are enriched in gly residues; the sequence is NGGGAASAGAGG. Low complexity predominate over residues 272-285; it reads AASPANSQQSQQQQ. Serine 1145 is subject to Phosphoserine. Threonine 1148 is subject to Phosphothreonine. The segment covering 1157-1180 has biased composition (low complexity); that stretch reads TTPKSSTPATVSASVEASSSTGEA. Over residues 1189–1221 the composition is skewed to polar residues; that stretch reads RSSTPSKGATTPTSKQSNAAVQPPSSTTPNSVS. Composition is skewed to low complexity over residues 1230-1244 and 1260-1290; these read TCGS…STTT and AVST…SSIS. The segment at 1356 to 1389 adopts an FCS-type zinc-finger fold; that stretch reads SAPGSDMVACEQCGKMEHKAKLKRKRYCSPGCSR. Cysteine 1365, cysteine 1368, cysteine 1383, and cysteine 1387 together coordinate Zn(2+). The SAM domain maps to 1513 to 1577; that stretch reads WSVDDVSNFI…VAKVESIKEV (65 aa).

Component of PRC1 complex, which contains many PcG proteins like Pc, ph, Scm, Psc, Sce and also chromatin-remodeling proteins such as histone deacetylases. This complex is distinct from the Esc/E(z) complex, at least composed of esc, E(z), Su(z)12, HDAC1/Rpd3 and Caf1-55. The 2 complexes however cooperate and interact together during the first 3 hours of development to establish PcG silencing. Interacts with the SAM domain of Scm via its SAM domain in vitro. Interacts with Trl in vivo and with corto in vitro. In terms of tissue distribution, salivary glands.

The protein resides in the nucleus. In terms of biological role, polycomb group (PcG) protein. PcG proteins act by forming multiprotein complexes, which are required to maintain the transcriptionally repressive state of homeotic genes throughout development. PcG proteins are not required to initiate repression, but to maintain it during later stages of development. Component of the PcG multiprotein PRC1 complex, a complex that acts via chromatin remodeling and modification of histones; it mediates monoubiquitination of histone H2A 'Lys-118', rendering chromatin heritably changed in its expressibility. Plays a role in regulating the expression of other pair-rule genes such as eve, ftz, and H. This is Polyhomeotic-proximal chromatin protein (ph-p) from Drosophila melanogaster (Fruit fly).